Reading from the N-terminus, the 330-residue chain is MKIAIDAMGGDHAPKAVVLGAMKAIKEYSDLHITLVGKEEEIRQYLTSEERITILHTDEKIESTDEPVRAVRRKKQASMVLAAQQVKDGVADACISAGSTGALMAAGLFVVGRMEGIERPALSPTMPTVDGEGFVMLDVGANVDAKPIHLYQYAVMGSVYAEKVRGIKNPRVGLLNVGTEDGKGNELSKQVFTMLKDAPINFVGNVESRDLLQGVADVVVCDGFTGNVALKSLEGTALALFSMLKEQLMSSFTSKLAAAVLKPKLMVLKDKMDYSEYGGAALFGLKAPVIKAHGSSNDQSIFSAIRQTREMVAKEVIPTISSVMEKEPLQ.

This sequence belongs to the PlsX family. As to quaternary structure, homodimer. Probably interacts with PlsY.

The protein resides in the cytoplasm. The enzyme catalyses a fatty acyl-[ACP] + phosphate = an acyl phosphate + holo-[ACP]. It functions in the pathway lipid metabolism; phospholipid metabolism. Catalyzes the reversible formation of acyl-phosphate (acyl-PO(4)) from acyl-[acyl-carrier-protein] (acyl-ACP). This enzyme utilizes acyl-ACP as fatty acyl donor, but not acyl-CoA. The polypeptide is Phosphate acyltransferase (Bacillus cereus (strain AH820)).